A 228-amino-acid chain; its full sequence is Urease accessory protein UreF (228 aa).

It belongs to the UreF family. As to quaternary structure, ureD, UreF and UreG form a complex that acts as a GTP-hydrolysis-dependent molecular chaperone, activating the urease apoprotein by helping to assemble the nickel containing metallocenter of UreC. The UreE protein probably delivers the nickel.

The protein resides in the cytoplasm. Its function is as follows. Required for maturation of urease via the functional incorporation of the urease nickel metallocenter. The protein is Urease accessory protein UreF of Prochlorococcus marinus (strain MIT 9215).